The sequence spans 593 residues: Multidrug resistance-like ATP-binding protein MdlB (593 aa).

Topologically, residues 1-25 (MRSFSQLWPTLKRLLAYGSPWRKPL) are cytoplasmic. The ABC transmembrane type-1 domain occupies 25–310 (LGIAVLMMWV…LTTQQAMLQQ (286 aa)). Residues 26-46 (GIAVLMMWVAAAAEVSGPLLI) form a helical membrane-spanning segment. The Periplasmic portion of the chain corresponds to 47–62 (SYFIDNMVAKNNLPLK). The helical transmembrane segment at 63–83 (VVAGLAAAYVGLQLFAAGLHY) threads the bilayer. Over 84–140 (AQSLLFNRAAVGVVQQLRTDVMDAALRQPLSEFDTQPVGQVISRVTNDTEVIRDLYV) the chain is Cytoplasmic. A helical transmembrane segment spans residues 141–161 (TVVATVLRSAALVGAMLVAMF). Topologically, residues 162–164 (SLD) are periplasmic. Residues 165-185 (WRMALVAIMIFPVVLVVMVIY) traverse the membrane as a helical segment. At 186 to 254 (QRYSTPIVRR…LRLDGFLLRP (69 aa)) the chain is on the cytoplasmic side. Residues 255–275 (LLSLFSSLILCGLLMLFGFSA) form a helical membrane-spanning segment. The Periplasmic portion of the chain corresponds to 276 to 278 (SGT). The helical transmembrane segment at 279–299 (IEVGVLYAFISYLGRLNEPLI) threads the bilayer. The Cytoplasmic segment spans residues 300–593 (ELTTQQAMLQ…SVREEESLSA (294 aa)). The 234-residue stretch at 341 to 574 (IEVDNVSFAY…QGRYWQMYQL (234 aa)) folds into the ABC transporter domain. Residue 374-381 (GHTGSGKS) coordinates ATP.

This sequence belongs to the ABC transporter superfamily. Drug exporter-2 (TC 3.A.1.117) family.

The protein resides in the cell inner membrane. The catalysed reaction is ATP + H2O + xenobioticSide 1 = ADP + phosphate + xenobioticSide 2.. The polypeptide is Multidrug resistance-like ATP-binding protein MdlB (mdlB) (Escherichia coli O6:H1 (strain CFT073 / ATCC 700928 / UPEC)).